The following is a 40-amino-acid chain: MPTRSTNPNKQPVELNRTSLFLGLLLVFVLGILFSSYFFN.

Residues 19 to 39 traverse the membrane as a helical segment; the sequence is SLFLGLLLVFVLGILFSSYFF.

The protein belongs to the PsbL family. PSII is composed of 1 copy each of membrane proteins PsbA, PsbB, PsbC, PsbD, PsbE, PsbF, PsbH, PsbI, PsbJ, PsbK, PsbL, PsbM, PsbT, PsbX, PsbY, PsbZ, Psb30/Ycf12, peripheral proteins PsbO, CyanoQ (PsbQ), PsbU, PsbV and a large number of cofactors. It forms dimeric complexes.

It localises to the cellular thylakoid membrane. One of the components of the core complex of photosystem II (PSII). PSII is a light-driven water:plastoquinone oxidoreductase that uses light energy to abstract electrons from H(2)O, generating O(2) and a proton gradient subsequently used for ATP formation. It consists of a core antenna complex that captures photons, and an electron transfer chain that converts photonic excitation into a charge separation. This subunit is found at the monomer-monomer interface and is required for correct PSII assembly and/or dimerization. The protein is Photosystem II reaction center protein L of Synechococcus elongatus (strain ATCC 33912 / PCC 7942 / FACHB-805) (Anacystis nidulans R2).